We begin with the raw amino-acid sequence, 409 residues long: Argininosuccinate synthase (409 aa).

An ATP-binding site is contributed by 9 to 17 (AYSGGLDTS). Tyrosine 86 serves as a coordination point for L-citrulline. Residue glycine 116 participates in ATP binding. Residues threonine 118, asparagine 122, and aspartate 123 each contribute to the L-aspartate site. Asparagine 122 lines the L-citrulline pocket. L-citrulline contacts are provided by arginine 126, serine 174, serine 183, glutamate 259, and tyrosine 271.

This sequence belongs to the argininosuccinate synthase family. Type 1 subfamily. In terms of assembly, homotetramer.

The protein localises to the cytoplasm. The catalysed reaction is L-citrulline + L-aspartate + ATP = 2-(N(omega)-L-arginino)succinate + AMP + diphosphate + H(+). It functions in the pathway amino-acid biosynthesis; L-arginine biosynthesis; L-arginine from L-ornithine and carbamoyl phosphate: step 2/3. This chain is Argininosuccinate synthase, found in Halalkalibacterium halodurans (strain ATCC BAA-125 / DSM 18197 / FERM 7344 / JCM 9153 / C-125) (Bacillus halodurans).